Here is a 138-residue protein sequence, read N- to C-terminus: Secreted RxLR effector protein 51 (138 aa).

A signal peptide spans 1-19 (MRSSTILFVLGVAMVAVNG). The short motif at 38–53 (RLLRSNSGKHKTDEER) is the RxLR-dEER element. The N-linked (GlcNAc...) asparagine glycan is linked to Asn101.

This sequence belongs to the RxLR effector family.

It is found in the secreted. Its subcellular location is the host nucleus. Functionally, secreted effector that completely suppresses the host cell death induced by cell death-inducing proteins. The protein is Secreted RxLR effector protein 51 of Plasmopara viticola (Downy mildew of grapevine).